Here is a 570-residue protein sequence, read N- to C-terminus: Sulfite reductase [NADPH] hemoprotein beta-component (570 aa).

Residues Cys434, Cys440, Cys479, and Cys483 each contribute to the [4Fe-4S] cluster site. Residue Cys483 coordinates siroheme.

Belongs to the nitrite and sulfite reductase 4Fe-4S domain family. In terms of assembly, alpha(8)-beta(8). The alpha component is a flavoprotein, the beta component is a hemoprotein. Siroheme serves as cofactor. It depends on [4Fe-4S] cluster as a cofactor.

The enzyme catalyses hydrogen sulfide + 3 NADP(+) + 3 H2O = sulfite + 3 NADPH + 4 H(+). The protein operates within sulfur metabolism; hydrogen sulfide biosynthesis; hydrogen sulfide from sulfite (NADPH route): step 1/1. In terms of biological role, component of the sulfite reductase complex that catalyzes the 6-electron reduction of sulfite to sulfide. This is one of several activities required for the biosynthesis of L-cysteine from sulfate. The sequence is that of Sulfite reductase [NADPH] hemoprotein beta-component (cysI) from Salmonella typhimurium (strain LT2 / SGSC1412 / ATCC 700720).